The following is a 420-amino-acid chain: MVENSYVLFARLCVELFHELPPLPSDESHGDITTFERLFLRKCRIELENASPKTEHLPLVYVDETNYYRFIKTVRVLAEVYKNSKITETTRKSMIQVLMNPILPPERITDAMNLFRSIIGKLADFHFSDEKFNQLVRSSRVVELEGNYNEEVKLRKEAEDALAMKKEDVEMMEQLLESYKEEQGKLQLQAKALEHKLEAELRHRKETETLLAIERDRIEKVKIQLETVENEIDNTRLKAEEFERKYEGEMILRRESEIALEKEKKELEEVKLKLETYEREQENLSSEVRTWQDKYEQESSLRKLSEYALSREQEELQIVKGLLEFYNGEADAMREERDKALKTAKEQMEKRQPPSSFFCPITQEVMKDPHFAADGFTYEAESIRKWLSTGHQTSPMTNLRLSHLTLVPNRALRSAIEELV.

Residues 4–168 (NSYVLFARLC…EDALAMKKED (165 aa)) enclose the MIF4G domain. Residues 139 to 352 (SRVVELEGNY…TAKEQMEKRQ (214 aa)) are a coiled coil. One can recognise a U-box domain in the interval 352–420 (QPPSSFFCPI…ALRSAIEELV (69 aa)).

It catalyses the reaction S-ubiquitinyl-[E2 ubiquitin-conjugating enzyme]-L-cysteine + [acceptor protein]-L-lysine = [E2 ubiquitin-conjugating enzyme]-L-cysteine + N(6)-ubiquitinyl-[acceptor protein]-L-lysine.. It functions in the pathway protein modification; protein ubiquitination. Its function is as follows. Functions as an E3 ubiquitin ligase. The polypeptide is Putative U-box domain-containing protein 58 (PUB58) (Arabidopsis thaliana (Mouse-ear cress)).